The sequence spans 283 residues: Diaminopimelate epimerase (283 aa).

Residues Asn13, Gln45, and Asn65 each contribute to the substrate site. Catalysis depends on Cys74, which acts as the Proton donor. Substrate contacts are provided by residues 75–76 (GN), Asn156, Asn190, and 208–209 (ER). The active-site Proton acceptor is Cys217. 218 to 219 (GS) contacts substrate.

This sequence belongs to the diaminopimelate epimerase family. In terms of assembly, homodimer.

It is found in the cytoplasm. The enzyme catalyses (2S,6S)-2,6-diaminopimelate = meso-2,6-diaminopimelate. Its pathway is amino-acid biosynthesis; L-lysine biosynthesis via DAP pathway; DL-2,6-diaminopimelate from LL-2,6-diaminopimelate: step 1/1. Functionally, catalyzes the stereoinversion of LL-2,6-diaminopimelate (L,L-DAP) to meso-diaminopimelate (meso-DAP), a precursor of L-lysine and an essential component of the bacterial peptidoglycan. This chain is Diaminopimelate epimerase, found in Bartonella tribocorum (strain CIP 105476 / IBS 506).